Consider the following 101-residue polypeptide: ATP-dependent Clp protease adapter protein ClpS (101 aa).

This sequence belongs to the ClpS family. As to quaternary structure, binds to the N-terminal domain of the chaperone ClpA.

Its function is as follows. Involved in the modulation of the specificity of the ClpAP-mediated ATP-dependent protein degradation. In Corynebacterium efficiens (strain DSM 44549 / YS-314 / AJ 12310 / JCM 11189 / NBRC 100395), this protein is ATP-dependent Clp protease adapter protein ClpS.